The chain runs to 367 residues: DNA replication and repair protein RecF (367 aa).

30 to 37 (GANGSGKT) is an ATP binding site.

The protein belongs to the RecF family.

The protein localises to the cytoplasm. The RecF protein is involved in DNA metabolism; it is required for DNA replication and normal SOS inducibility. RecF binds preferentially to single-stranded, linear DNA. It also seems to bind ATP. The polypeptide is DNA replication and repair protein RecF (Pseudomonas fluorescens (strain Pf0-1)).